The primary structure comprises 206 residues: Small ribosomal subunit protein uS3 (206 aa).

Residues isoleucine 39–lysine 107 form the KH type-2 domain.

The protein belongs to the universal ribosomal protein uS3 family. As to quaternary structure, part of the 30S ribosomal subunit. Forms a tight complex with proteins S10 and S14.

Functionally, binds the lower part of the 30S subunit head. Binds mRNA in the 70S ribosome, positioning it for translation. This Wolbachia pipientis subsp. Culex pipiens (strain wPip) protein is Small ribosomal subunit protein uS3.